Reading from the N-terminus, the 297-residue chain is ATP synthase gamma chain (297 aa).

It belongs to the ATPase gamma chain family. F-type ATPases have 2 components, CF(1) - the catalytic core - and CF(0) - the membrane proton channel. CF(1) has five subunits: alpha(3), beta(3), gamma(1), delta(1), epsilon(1). CF(0) has three main subunits: a, b and c.

The protein localises to the cell membrane. Produces ATP from ADP in the presence of a proton gradient across the membrane. The gamma chain is believed to be important in regulating ATPase activity and the flow of protons through the CF(0) complex. The polypeptide is ATP synthase gamma chain (Renibacterium salmoninarum (strain ATCC 33209 / DSM 20767 / JCM 11484 / NBRC 15589 / NCIMB 2235)).